The sequence spans 552 residues: Phosphoglucomutase (552 aa).

S135 acts as the Phosphoserine intermediate in catalysis. The Mg(2+) site is built by S135, D289, D291, and D293.

This sequence belongs to the phosphohexose mutase family. It depends on Mg(2+) as a cofactor.

It catalyses the reaction alpha-D-glucose 1-phosphate = alpha-D-glucose 6-phosphate. Its pathway is glycolipid metabolism; diglucosyl-diacylglycerol biosynthesis. Functionally, catalyzes the interconversion between glucose-6-phosphate and alpha-glucose-1-phosphate. This is the first step in the biosynthesis of diglucosyl-diacylglycerol (Glc2-DAG), i.e. a glycolipid found in the membrane, which is also used as a membrane anchor for lipoteichoic acid (LTA). This Staphylococcus saprophyticus subsp. saprophyticus (strain ATCC 15305 / DSM 20229 / NCIMB 8711 / NCTC 7292 / S-41) protein is Phosphoglucomutase (pgcA).